We begin with the raw amino-acid sequence, 651 residues long: Macrolide export ATP-binding/permease protein MacB (651 aa).

The ABC transporter domain maps to 2–239; sequence IEIVNVTKTY…PQMPQGGMEA (238 aa). 38-45 contacts ATP; sequence GASGSGKS. The next 4 helical transmembrane spans lie at 269-289, 532-552, 589-609, and 614-634; these read FLSV…MALG, IAAI…LVSV, IIGI…AGWA, and MFSV…FGLW.

This sequence belongs to the ABC transporter superfamily. Macrolide exporter (TC 3.A.1.122) family. Homodimer.

Its subcellular location is the cell inner membrane. Functionally, non-canonical ABC transporter that contains transmembrane domains (TMD), which form a pore in the inner membrane, and an ATP-binding domain (NBD), which is responsible for energy generation. Confers resistance against macrolides. This Chlorobaculum tepidum (strain ATCC 49652 / DSM 12025 / NBRC 103806 / TLS) (Chlorobium tepidum) protein is Macrolide export ATP-binding/permease protein MacB.